A 406-amino-acid polypeptide reads, in one-letter code: uncharacterized protein (406 aa).

This sequence belongs to the mycobacterial PPE family.

This is an uncharacterized protein from Mycobacterium tuberculosis (strain CDC 1551 / Oshkosh).